Reading from the N-terminus, the 380-residue chain is Mitogen-activated protein kinase 3 (380 aa).

A2 carries the post-translational modification N-acetylalanine. One can recognise a Protein kinase domain in the interval 43-331; the sequence is YTQLQYIGEG…VEEALAHPYL (289 aa). ATP contacts are provided by residues 49 to 57 and K72; that span reads IGEGAYGMV. Residue D167 is the Proton acceptor of the active site. T199 is subject to Phosphothreonine. T203 is modified (phosphothreonine; by MAP2K1 and MAP2K2). Residues 203-205 carry the TXY motif; that stretch reads TEY. Y205 carries the phosphotyrosine; by MAP2K1 and MAP2K2 modification. T208 carries the post-translational modification Phosphothreonine; by autocatalysis.

The protein belongs to the protein kinase superfamily. CMGC Ser/Thr protein kinase family. MAP kinase subfamily. Binds both upstream activators and downstream substrates in multimolecular complexes. Found in a complex with at least BRAF, HRAS, MAP2K1/MEK1, MAPK3 and RGS14. Interacts with ADAM15, ARRB2, CANX, DAPK1 (via death domain), HSF4, IER3, MAP2K1/MEK1, MORG1, NISCH, PEA15, SGK1 and MKNK2. MKNK2 isoform 1 binding prevents from dephosphorylation and inactivation. Interacts with TPR. Interacts with HSF1 (via D domain and preferentially with hyperphosphorylated form); this interaction occurs upon heat shock. Interacts with CDKN2AIP. Interacts with CAVIN4. Interacts with GIT1; this interaction is necessary for MAPK3 localization to focal adhesions. Interacts with ZNF263. Interacts with EBF4. Mg(2+) serves as cofactor. Phosphorylated upon FLT3 and KIT signaling. Ligand-activated ALK induces tyrosine phosphorylation. Dephosphorylated by PTPRJ at Tyr-205. Dually phosphorylated on Thr-203 and Tyr-205, which activates the enzyme. Post-translationally, ubiquitinated by TRIM15 via 'Lys-63'-linked ubiquitination; leading to activation. Deubiquitinated by CYLD. In terms of tissue distribution, highest levels within the nervous system, expressed in different tissues, mostly in intestine, placenta and lung.

The protein localises to the cytoplasm. It localises to the nucleus. It is found in the membrane. Its subcellular location is the caveola. The protein resides in the cell junction. The protein localises to the focal adhesion. The catalysed reaction is L-seryl-[protein] + ATP = O-phospho-L-seryl-[protein] + ADP + H(+). It carries out the reaction L-threonyl-[protein] + ATP = O-phospho-L-threonyl-[protein] + ADP + H(+). With respect to regulation, phosphorylated by MAP2K1/MEK1 and MAP2K2/MEK2 on Thr-203 and Tyr-205 in response to external stimuli like insulin or NGF. Both phosphorylations are required for activity. This phosphorylation causes dramatic conformational changes, which enable full activation and interaction of MAPK1/ERK2 with its substrates. Dephosphorylated and inactivated by DUSP3, DUSP6 and DUSP9. In terms of biological role, serine/threonine kinase which acts as an essential component of the MAP kinase signal transduction pathway. MAPK1/ERK2 and MAPK3/ERK1 are the 2 MAPKs which play an important role in the MAPK/ERK cascade. They participate also in a signaling cascade initiated by activated KIT and KITLG/SCF. Depending on the cellular context, the MAPK/ERK cascade mediates diverse biological functions such as cell growth, adhesion, survival and differentiation through the regulation of transcription, translation, cytoskeletal rearrangements. The MAPK/ERK cascade also plays a role in initiation and regulation of meiosis, mitosis, and postmitotic functions in differentiated cells by phosphorylating a number of transcription factors. About 160 substrates have already been discovered for ERKs. Many of these substrates are localized in the nucleus, and seem to participate in the regulation of transcription upon stimulation. However, other substrates are found in the cytosol as well as in other cellular organelles, and those are responsible for processes such as translation, mitosis and apoptosis. Moreover, the MAPK/ERK cascade is also involved in the regulation of the endosomal dynamics, including lysosome processing and endosome cycling through the perinuclear recycling compartment (PNRC); as well as in the fragmentation of the Golgi apparatus during mitosis. The substrates include transcription factors (such as ATF2, BCL6, ELK1, ERF, FOS, HSF4 or SPZ1), cytoskeletal elements (such as CANX, CTTN, GJA1, MAP2, MAPT, PXN, SORBS3 or STMN1), regulators of apoptosis (such as BAD, BTG2, CASP9, DAPK1, IER3, MCL1 or PPARG), regulators of translation (such as EIF4EBP1) and a variety of other signaling-related molecules (like ARHGEF2, DEPTOR, FRS2 or GRB10). Protein kinases (such as RAF1, RPS6KA1/RSK1, RPS6KA3/RSK2, RPS6KA2/RSK3, RPS6KA6/RSK4, SYK, MKNK1/MNK1, MKNK2/MNK2, RPS6KA5/MSK1, RPS6KA4/MSK2, MAPKAPK3 or MAPKAPK5) and phosphatases (such as DUSP1, DUSP4, DUSP6 or DUSP16) are other substrates which enable the propagation the MAPK/ERK signal to additional cytosolic and nuclear targets, thereby extending the specificity of the cascade. The sequence is that of Mitogen-activated protein kinase 3 (Mapk3) from Rattus norvegicus (Rat).